The primary structure comprises 227 residues: Small ribosomal subunit protein uS3m (227 aa).

Belongs to the universal ribosomal protein uS3 family. In terms of assembly, component of the mitochondrial small ribosomal subunit (mt-SSU). Mature yeast 74S mitochondrial ribosomes consist of a small (37S) and a large (54S) subunit. The 37S small subunit contains a 15S ribosomal RNA (15S mt-rRNA) and at least 32 different proteins. The 54S large subunit contains a 21S rRNA (21S mt-rRNA) and at least 45 different proteins. uS3m, uS4m and uS5m form the narrow entry site of the mRNA channel.

The protein resides in the mitochondrion. Functionally, essential for mitochondrial protein synthesis and required for the maturation of small ribosomal subunits. Its function is as follows. Component of the mitochondrial ribosome (mitoribosome), a dedicated translation machinery responsible for the synthesis of mitochondrial genome-encoded proteins, including at least some of the essential transmembrane subunits of the mitochondrial respiratory chain. The mitoribosomes are attached to the mitochondrial inner membrane and translation products are cotranslationally integrated into the membrane. uS3m is essential for mitochondrial protein synthesis and required for the maturation of small ribosomal subunits. The chain is Small ribosomal subunit protein uS3m (var1) from Schizosaccharomyces pombe (strain 972 / ATCC 24843) (Fission yeast).